The chain runs to 629 residues: EF-hand calcium-binding domain-containing protein 7 (629 aa).

The interval Met1–Lys25 is disordered. A compositionally biased stretch (polar residues) spans Ser7 to Ser21. 2 consecutive EF-hand domains span residues Thr102–Lys137 and Met138–Gln173. The tract at residues Asn195–Asp229 is disordered. A phosphoserine mark is found at Ser200 and Ser212. The 36-residue stretch at Glu403–Glu438 folds into the EF-hand 3 domain. Ca(2+)-binding residues include Asp416, Asp418, Asn420, and Glu427.

Component of the EvC complex composed of EFCAB7, IQCE, EVC2 and EVC; built from two subcomplexes, EVC2:EVC and EFCAB7:IQCE. Interacts (via EF-hand 1 and 2) with IQCE (via N-terminus); this interaction anchors the EVC-EVC2 complex in a signaling microdomain at the base of cilia and stimulates the Hedgehog (Hh) pathway. Interacts with EVC2 (via N-terminal end). Interacts with EVC.

It localises to the cell projection. The protein resides in the cilium membrane. Its function is as follows. Component of the EvC complex that positively regulates ciliary Hedgehog (Hh) signaling. Required for the localization of the EVC2:EVC subcomplex at the base of primary cilia. The sequence is that of EF-hand calcium-binding domain-containing protein 7 (EFCAB7) from Homo sapiens (Human).